Consider the following 485-residue polypeptide: Pyruvate kinase (485 aa).

Arg33 provides a ligand contact to substrate. K(+)-binding residues include Asn35, Ser37, Asp67, and Thr68. 35–38 (NFSH) contacts ATP. 2 residues coordinate ATP: Arg74 and Lys155. Position 221 (Glu221) interacts with Mg(2+). Residues Gly244, Asp245, and Thr277 each contribute to the substrate site. Mg(2+) is bound at residue Asp245.

The protein belongs to the pyruvate kinase family. As to quaternary structure, homotetramer. Requires Mg(2+) as cofactor. K(+) serves as cofactor.

It catalyses the reaction pyruvate + ATP = phosphoenolpyruvate + ADP + H(+). It participates in carbohydrate degradation; glycolysis; pyruvate from D-glyceraldehyde 3-phosphate: step 5/5. The chain is Pyruvate kinase (pyk) from Chlamydia trachomatis serovar L2 (strain ATCC VR-902B / DSM 19102 / 434/Bu).